A 442-amino-acid polypeptide reads, in one-letter code: Probable xylan O-acetyltransferase 8 (442 aa).

Residues 1-13 (MVQLPAMKRVKGR) are Cytoplasmic-facing. Residues 14-34 (APLSVVVAIIGGLALAGIIFT) traverse the membrane as a helical; Signal-anchor for type II membrane protein segment. The Lumenal segment spans residues 35 to 442 (EDLRGLTEVK…TWNRLLYAHL (408 aa)). N-linked (GlcNAc...) asparagine glycosylation occurs at asparagine 96. Disulfide bonds link cysteine 100–cysteine 151, cysteine 122–cysteine 187, cysteine 131–cysteine 426, and cysteine 344–cysteine 422. The short motif at 174–176 (GDS) is the GDS motif element. Serine 176 (nucleophile) is an active-site residue. 3 N-linked (GlcNAc...) asparagine glycosylation sites follow: asparagine 217, asparagine 346, and asparagine 384. The active-site Proton donor is aspartate 421. The DXXH motif signature appears at 421–424 (DCIH). Histidine 424 functions as the Proton acceptor in the catalytic mechanism.

The protein belongs to the PC-esterase family. TBL subfamily.

Its subcellular location is the golgi apparatus membrane. Probable xylan acetyltransferase required for 2-O- and 3-O-monoacetylation of xylosyl residues in xylan. Possesses extremely low activity in vitro. The polypeptide is Probable xylan O-acetyltransferase 8 (Oryza sativa subsp. japonica (Rice)).